We begin with the raw amino-acid sequence, 148 residues long: Putative FAD-linked sulfhydryl oxidase 096R (148 aa).

Positions 1–103 (MSIDPKLWGN…LAAKTVFQRY (103 aa)) constitute an ERV/ALR sulfhydryl oxidase domain. Cysteines 48 and 51 form a disulfide. Residues 122 to 142 (WSPWLTTALAVILVVVVAGIG) traverse the membrane as a helical segment.

Belongs to the IIV-6 347L family. FAD is required as a cofactor.

The protein resides in the membrane. It catalyses the reaction 2 R'C(R)SH + O2 = R'C(R)S-S(R)CR' + H2O2. In terms of biological role, FAD-dependent sulfhydryl oxidase that catalyzes disulfide bond formation. In Aedes vexans (Inland floodwater mosquito), this protein is Putative FAD-linked sulfhydryl oxidase 096R.